Reading from the N-terminus, the 513-residue chain is CUGBP Elav-like family member 2 (513 aa).

RRM domains are found at residues 35–118 (IKMF…PADS), 127–207 (RKLF…FADT), and 428–506 (ANLF…LKRS).

It belongs to the CELF/BRUNOL family.

It is found in the nucleus. Its subcellular location is the cytoplasm. Its function is as follows. RNA-binding protein implicated in the regulation of several post-transcriptional events. May be involved in pre-mRNA alternative splicing, mRNA translation repression and stability. The protein is CUGBP Elav-like family member 2 (celf2) of Xenopus tropicalis (Western clawed frog).